A 318-amino-acid polypeptide reads, in one-letter code: Methionyl-tRNA formyltransferase (318 aa).

(6S)-5,6,7,8-tetrahydrofolate is bound at residue 112–115 (SILP).

The protein belongs to the Fmt family.

The enzyme catalyses L-methionyl-tRNA(fMet) + (6R)-10-formyltetrahydrofolate = N-formyl-L-methionyl-tRNA(fMet) + (6S)-5,6,7,8-tetrahydrofolate + H(+). Its function is as follows. Attaches a formyl group to the free amino group of methionyl-tRNA(fMet). The formyl group appears to play a dual role in the initiator identity of N-formylmethionyl-tRNA by promoting its recognition by IF2 and preventing the misappropriation of this tRNA by the elongation apparatus. This Shewanella baltica (strain OS223) protein is Methionyl-tRNA formyltransferase.